The chain runs to 147 residues: Nucleoside diphosphate kinase (147 aa).

ATP contacts are provided by K9, F57, R85, T91, R102, and N112. H115 acts as the Pros-phosphohistidine intermediate in catalysis.

Belongs to the NDK family. As to quaternary structure, homotetramer. It depends on Mg(2+) as a cofactor.

The protein localises to the cytoplasm. It carries out the reaction a 2'-deoxyribonucleoside 5'-diphosphate + ATP = a 2'-deoxyribonucleoside 5'-triphosphate + ADP. The enzyme catalyses a ribonucleoside 5'-diphosphate + ATP = a ribonucleoside 5'-triphosphate + ADP. Functionally, major role in the synthesis of nucleoside triphosphates other than ATP. The ATP gamma phosphate is transferred to the NDP beta phosphate via a ping-pong mechanism, using a phosphorylated active-site intermediate. The chain is Nucleoside diphosphate kinase from Fervidobacterium nodosum (strain ATCC 35602 / DSM 5306 / Rt17-B1).